A 522-amino-acid chain; its full sequence is Maturase K (522 aa).

Belongs to the intron maturase 2 family. MatK subfamily.

Its subcellular location is the plastid. It is found in the chloroplast. Usually encoded in the trnK tRNA gene intron. Probably assists in splicing its own and other chloroplast group II introns. The protein is Maturase K of Iris sanguinea (Japanese iris).